The following is a 75-amino-acid chain: Lysis protein (75 aa).

The span at 1 to 16 (METRFPQQSQQTPAST) shows a compositional bias: polar residues. The segment at 1–29 (METRFPQQSQQTPASTNRRRPFKHEDYPC) is disordered. Residues 38–60 (LYVLIFLAIFLSKFTNQLLLSLL) traverse the membrane as a helical segment.

This sequence belongs to the Leviviricetes lysis protein family.

It is found in the host cell inner membrane. It localises to the host cell outer membrane. In terms of biological role, induces the formation of specific membrane adhesion sites between the inner and outer membranes, apparently leading to host cell lysis. Lysis may be performed via activation of host murein hydrolases. The sequence is that of Lysis protein from Escherichia phage MS2 (Bacteriophage MS2).